The primary structure comprises 311 residues: Phosphoribosylaminoimidazole-succinocarboxamide synthase (311 aa).

The protein belongs to the SAICAR synthetase family.

The enzyme catalyses 5-amino-1-(5-phospho-D-ribosyl)imidazole-4-carboxylate + L-aspartate + ATP = (2S)-2-[5-amino-1-(5-phospho-beta-D-ribosyl)imidazole-4-carboxamido]succinate + ADP + phosphate + 2 H(+). The protein operates within purine metabolism; IMP biosynthesis via de novo pathway; 5-amino-1-(5-phospho-D-ribosyl)imidazole-4-carboxamide from 5-amino-1-(5-phospho-D-ribosyl)imidazole-4-carboxylate: step 1/2. The chain is Phosphoribosylaminoimidazole-succinocarboxamide synthase from Aromatoleum aromaticum (strain DSM 19018 / LMG 30748 / EbN1) (Azoarcus sp. (strain EbN1)).